The sequence spans 360 residues: DNA replication and repair protein RecF (360 aa).

30–37 (GANGSGKT) serves as a coordination point for ATP.

It belongs to the RecF family.

It is found in the cytoplasm. Functionally, the RecF protein is involved in DNA metabolism; it is required for DNA replication and normal SOS inducibility. RecF binds preferentially to single-stranded, linear DNA. It also seems to bind ATP. The protein is DNA replication and repair protein RecF of Acinetobacter baumannii (strain AB307-0294).